A 473-amino-acid polypeptide reads, in one-letter code: Arginine biosynthesis bifunctional protein ArgJ, mitochondrial (473 aa).

Substrate-binding residues include threonine 201, lysine 230, threonine 241, glutamate 328, asparagine 468, and threonine 473. The Nucleophile role is filled by threonine 241.

This sequence belongs to the ArgJ family. In terms of assembly, heterodimer of an alpha and a beta chain. In terms of processing, the alpha and beta chains are autoproteolytically processed from a single precursor protein within the mitochondrion.

The protein localises to the mitochondrion matrix. It carries out the reaction N(2)-acetyl-L-ornithine + L-glutamate = N-acetyl-L-glutamate + L-ornithine. It catalyses the reaction L-glutamate + acetyl-CoA = N-acetyl-L-glutamate + CoA + H(+). It functions in the pathway amino-acid biosynthesis; L-arginine biosynthesis; L-ornithine and N-acetyl-L-glutamate from L-glutamate and N(2)-acetyl-L-ornithine (cyclic): step 1/1. The protein operates within amino-acid biosynthesis; L-arginine biosynthesis; N(2)-acetyl-L-ornithine from L-glutamate: step 1/4. Catalyzes two activities which are involved in the cyclic version of arginine biosynthesis: the synthesis of acetylglutamate from glutamate and acetyl-CoA, and of ornithine by transacetylation between acetylornithine and glutamate. The chain is Arginine biosynthesis bifunctional protein ArgJ, mitochondrial from Blastomyces gilchristii (strain SLH14081) (Blastomyces dermatitidis).